The following is an 84-amino-acid chain: Dolichol phosphate-mannose biosynthesis regulatory protein (84 aa).

The next 2 helical transmembrane spans lie at 11–31 and 49–69; these read FGLV…VILL and YAVL…GLFI.

The protein belongs to the DPM2 family. Component of the dolichol-phosphate mannose (DPM) synthase complex composed of DPM1, DPM2 and DPM3; in the complex interacts directly with DPM3. Component of the glycosylphosphatidylinositol-N-acetylglucosaminyltransferase (GPI-GnT) complex composed at least by PIGA, PIGC, PIGH, PIGP, PIGQ, PIGY and DPM2. Interacts with PIGA, PIGC and PIGQ.

It localises to the endoplasmic reticulum membrane. Its pathway is protein modification; protein glycosylation. In terms of biological role, regulates the biosynthesis of dolichol phosphate-mannose. Regulatory subunit of the dolichol-phosphate mannose (DPM) synthase complex; essential for the ER localization and stable expression of DPM1. Part of the glycosylphosphatidylinositol-N-acetylglucosaminyltransferase (GPI-GnT) complex that catalyzes the transfer of N-acetylglucosamine from UDP-N-acetylglucosamine to phosphatidylinositol and participates in the first step of GPI biosynthesis. May act by regulating the GPI-GNT complex. The protein is Dolichol phosphate-mannose biosynthesis regulatory protein of Mus musculus (Mouse).